The sequence spans 239 residues: Lactate utilization protein A (239 aa).

Belongs to the LutA/YkgE family.

Functionally, is involved in L-lactate degradation and allows cells to grow with lactate as the sole carbon source. The polypeptide is Lactate utilization protein A (Shouchella clausii (strain KSM-K16) (Alkalihalobacillus clausii)).